A 713-amino-acid chain; its full sequence is Ribosomal RNA large subunit methyltransferase K/L (713 aa).

One can recognise a THUMP domain in the interval leucine 43–leucine 154.

It belongs to the methyltransferase superfamily. RlmKL family.

It is found in the cytoplasm. The catalysed reaction is guanosine(2445) in 23S rRNA + S-adenosyl-L-methionine = N(2)-methylguanosine(2445) in 23S rRNA + S-adenosyl-L-homocysteine + H(+). It catalyses the reaction guanosine(2069) in 23S rRNA + S-adenosyl-L-methionine = N(2)-methylguanosine(2069) in 23S rRNA + S-adenosyl-L-homocysteine + H(+). Its function is as follows. Specifically methylates the guanine in position 2445 (m2G2445) and the guanine in position 2069 (m7G2069) of 23S rRNA. This chain is Ribosomal RNA large subunit methyltransferase K/L, found in Sodalis glossinidius (strain morsitans).